The sequence spans 478 residues: Cysteine--tRNA ligase (478 aa).

A Zn(2+)-binding site is contributed by cysteine 37. The 'HIGH' region signature appears at 39–49; sequence PTVYHYAHIGN. Residues cysteine 224, histidine 249, and glutamate 253 each contribute to the Zn(2+) site. Positions 281 to 285 match the 'KMSKS' region motif; that stretch reads KMSKS. Residue lysine 284 coordinates ATP.

This sequence belongs to the class-I aminoacyl-tRNA synthetase family. As to quaternary structure, monomer. It depends on Zn(2+) as a cofactor.

It localises to the cytoplasm. The catalysed reaction is tRNA(Cys) + L-cysteine + ATP = L-cysteinyl-tRNA(Cys) + AMP + diphosphate. In Protochlamydia amoebophila (strain UWE25), this protein is Cysteine--tRNA ligase.